A 594-amino-acid polypeptide reads, in one-letter code: uncharacterized protein (594 aa).

In terms of biological role, the presence of the two linear plasmids, termed pGKL1 and pGKL2, in strains of Kluyveromyces lactis confers the killer phenotype to the host cell, by promoting the secretion of a toxin able to inhibit the growth of sensitive strains. This is an uncharacterized protein from Kluyveromyces lactis (strain ATCC 8585 / CBS 2359 / DSM 70799 / NBRC 1267 / NRRL Y-1140 / WM37) (Yeast).